Reading from the N-terminus, the 95-residue chain is Co-chaperonin GroES (95 aa).

The protein belongs to the GroES chaperonin family. In terms of assembly, heptamer of 7 subunits arranged in a ring. Interacts with the chaperonin GroEL.

Its subcellular location is the cytoplasm. Functionally, together with the chaperonin GroEL, plays an essential role in assisting protein folding. The GroEL-GroES system forms a nano-cage that allows encapsulation of the non-native substrate proteins and provides a physical environment optimized to promote and accelerate protein folding. GroES binds to the apical surface of the GroEL ring, thereby capping the opening of the GroEL channel. In Bordetella bronchiseptica (strain ATCC BAA-588 / NCTC 13252 / RB50) (Alcaligenes bronchisepticus), this protein is Co-chaperonin GroES.